Here is a 778-residue protein sequence, read N- to C-terminus: Putative ATP-dependent RNA helicase MJ1505 (778 aa).

Residues 22 to 186 form the Helicase ATP-binding domain; that stretch reads IAANALKKKT…EICENLGIEH (165 aa). 35-42 contributes to the ATP binding site; the sequence is LSTGLGKT. The DEAH box motif lies at 137 to 140; that stretch reads DEAH. A Helicase C-terminal domain is found at 338-516; the sequence is KVVDMVKNIL…EIKEETEEIK (179 aa).

This sequence belongs to the DEAD box helicase family. DEAH subfamily.

It carries out the reaction ATP + H2O = ADP + phosphate + H(+). This is Putative ATP-dependent RNA helicase MJ1505 from Methanocaldococcus jannaschii (strain ATCC 43067 / DSM 2661 / JAL-1 / JCM 10045 / NBRC 100440) (Methanococcus jannaschii).